Here is a 264-residue protein sequence, read N- to C-terminus: ATP synthase subunit a (264 aa).

A run of 6 helical transmembrane segments spans residues 29–49 (TWHI…LWIF), 87–107 (NALI…MNFM), 134–154 (DVNI…YYSI), 177–197 (IPVN…SLAL), 208–228 (LIFI…SLGV), and 235–255 (LIFH…LTIV).

This sequence belongs to the ATPase A chain family. F-type ATPases have 2 components, CF(1) - the catalytic core - and CF(0) - the membrane proton channel. CF(1) has five subunits: alpha(3), beta(3), gamma(1), delta(1), epsilon(1). CF(0) has three main subunits: a(1), b(2) and c(9-12). The alpha and beta chains form an alternating ring which encloses part of the gamma chain. CF(1) is attached to CF(0) by a central stalk formed by the gamma and epsilon chains, while a peripheral stalk is formed by the delta and b chains.

The protein resides in the cell inner membrane. Key component of the proton channel; it plays a direct role in the translocation of protons across the membrane. The protein is ATP synthase subunit a of Shewanella sp. (strain MR-4).